Consider the following 1002-residue polypeptide: Golgin subfamily A member 2 (1002 aa).

Residues 1–11 are compositionally biased toward pro residues; it reads MWPQPRLPPRP. The interval 1 to 84 is interaction with p115/USO1; that stretch reads MWPQPRLPPR…AATLQPSDDT (84 aa). The interval 1-107 is disordered; that stretch reads MWPQPRLPPR…TSMAASQNHD (107 aa). A coiled-coil region spans residues 16–892; it reads ETRQSKLAAA…LELQELVLRL (877 aa). Residues arginine 18, arginine 30, and arginine 35 each carry the dimethylated arginine modification. A Nuclear localization signal motif is present at residues 26-49; that stretch reads KKKLREYQQRNSPGVPTGAKKKKK. Serine 37 is modified (phosphoserine). Over residues 52–63 the composition is skewed to polar residues; the sequence is NGSNPETTTSGG. At serine 66 the chain carries Phosphoserine. Over residues 95-105 the composition is skewed to polar residues; that stretch reads ASLTSMAASQN. Phosphoserine is present on residues serine 273, serine 438, and serine 690. The interval 694–724 is disordered; the sequence is HPGEGDGLDREEEEDEEEEEEEAVAVPQPMP. A compositionally biased stretch (acidic residues) spans 702–716; that stretch reads DREEEEDEEEEEEEA. Residues serine 937, serine 953, and serine 981 each carry the phosphoserine modification. The tract at residues 992-1002 is interaction with GORASP1/GRASP65; the sequence is DENDEVKITVI.

The protein belongs to the GOLGA2 family. As to quaternary structure, homodimer, may assemble into homohexamers. Homotetramer; forms a parallel homotetramer with a flexible rod-like structure that can give rise to I- and Y-shaped conformations. Interacts with GORASP1/GRASP65. The homooligomer forms a complex with GORASP1 with a 1:1 stoichiometry. Interacts with RAB1B that has been activated by GTP-binding. Interacts with p115/USO1; interaction with p115/USO1 inhibits interaction with STX5 and/or RAB1B. Interacts with STX5. Interacts with ZFPL1. Interacts with AKAP450/AKAP9; leading to recruit AKAP450/AKAP9 to the cis-Golgi. Cleaved by caspases at the onset of apoptosis. In terms of processing, methylation by PRMT5 is required for Golgi ribbon formation. While dimethylation at Arg-30 and Arg-35 are confirmed in vivo, it is unclear whether Arg-18 is methylated in vivo. Post-translationally, phosphorylated at Ser-37 by CDK1 at the onset of mitosis, inhibiting the interaction with p115/USO1 and triggering Golgi disassembly. Phosphorylated at Ser-37 in prophase as the Golgi complex starts to break down, and remains phosphorylated during further breakdown and partitioning of the Golgi fragments in metaphase and anaphase. In telophase, GM130 is dephosphorylated by PP2A as the Golgi fragments start to reassemble.

The protein localises to the golgi apparatus. The protein resides in the cis-Golgi network membrane. It localises to the endoplasmic reticulum-Golgi intermediate compartment membrane. Its subcellular location is the cytoplasm. It is found in the cytoskeleton. The protein localises to the spindle pole. Its function is as follows. Peripheral membrane component of the cis-Golgi stack that acts as a membrane skeleton that maintains the structure of the Golgi apparatus, and as a vesicle thether that facilitates vesicle fusion to the Golgi membrane. Required for normal protein transport from the endoplasmic reticulum to the Golgi apparatus and the cell membrane. Together with p115/USO1 and STX5, involved in vesicle tethering and fusion at the cis-Golgi membrane to maintain the stacked and inter-connected structure of the Golgi apparatus. Plays a central role in mitotic Golgi disassembly: phosphorylation at Ser-37 by CDK1 at the onset of mitosis inhibits the interaction with p115/USO1, preventing tethering of COPI vesicles and thereby inhibiting transport through the Golgi apparatus during mitosis. Also plays a key role in spindle pole assembly and centrosome organization. Promotes the mitotic spindle pole assembly by activating the spindle assembly factor TPX2 to nucleate microtubules around the Golgi and capture them to couple mitotic membranes to the spindle: upon phosphorylation at the onset of mitosis, GOLGA2 interacts with importin-alpha via the nuclear localization signal region, leading to recruit importin-alpha to the Golgi membranes and liberate the spindle assembly factor TPX2 from importin-alpha. TPX2 then activates AURKA kinase and stimulates local microtubule nucleation. Upon filament assembly, nascent microtubules are further captured by GOLGA2, thus linking Golgi membranes to the spindle. Regulates the meiotic spindle pole assembly, probably via the same mechanism. Also regulates the centrosome organization. Also required for the Golgi ribbon formation and glycosylation of membrane and secretory proteins. This Homo sapiens (Human) protein is Golgin subfamily A member 2 (GOLGA2).